Here is a 234-residue protein sequence, read N- to C-terminus: Glycerol uptake facilitator protein (234 aa).

6 consecutive transmembrane segments (helical) span residues 9–29 (FLGT…VVLP), 37–57 (GWIV…FVSG), 61–81 (PAYL…LPWA), 83–103 (VLPY…LVWL), 135–155 (LISE…LGLY), and 159–179 (AGIG…SLGG). The short motif at 65–67 (NPA) is the NPA 1 element. The short motif at 186–188 (NPA) is the NPA 2 element. Residues 214-234 (WIPVVGPVIGAALAVLVFSLF) traverse the membrane as a helical segment.

Belongs to the MIP/aquaporin (TC 1.A.8) family.

The protein resides in the cell membrane. It catalyses the reaction glycerol(in) = glycerol(out). Functionally, mediates glycerol diffusion across the cytoplasmic membrane via a pore-type mechanism. The sequence is that of Glycerol uptake facilitator protein (glpF) from Streptococcus pneumoniae serotype 4 (strain ATCC BAA-334 / TIGR4).